A 226-amino-acid polypeptide reads, in one-letter code: Ribose-5-phosphate isomerase A (226 aa).

Residues 32-35, 85-88, and 98-101 contribute to the substrate site; these read TGST, DGAD, and KGGG. E107 serves as the catalytic Proton acceptor. K125 contacts substrate.

This sequence belongs to the ribose 5-phosphate isomerase family. Homodimer.

The catalysed reaction is aldehydo-D-ribose 5-phosphate = D-ribulose 5-phosphate. The protein operates within carbohydrate degradation; pentose phosphate pathway; D-ribose 5-phosphate from D-ribulose 5-phosphate (non-oxidative stage): step 1/1. Functionally, catalyzes the reversible conversion of ribose-5-phosphate to ribulose 5-phosphate. In Saccharophagus degradans (strain 2-40 / ATCC 43961 / DSM 17024), this protein is Ribose-5-phosphate isomerase A.